The following is a 333-amino-acid chain: HTH-type transcriptional regulator pepR1 (333 aa).

Residues 6 to 60 (VTIYDVAREAKVSMATVSRVVNGNNNVRKETRDRVMEVIKRLHYQPNAVAQGLAS) form the HTH lacI-type domain. The segment at residues 8–27 (IYDVAREAKVSMATVSRVVN) is a DNA-binding region (H-T-H motif).

Its function is as follows. Transcriptional regulator of the pepQ gene for prolidase. The protein is HTH-type transcriptional regulator pepR1 (pepR1) of Lactobacillus delbrueckii subsp. lactis.